The chain runs to 256 residues: 1-(5-phosphoribosyl)-5-[(5-phosphoribosylamino)methylideneamino] imidazole-4-carboxamide isomerase (256 aa).

Aspartate 8 acts as the Proton acceptor in catalysis. Residue aspartate 129 is the Proton donor of the active site.

It belongs to the HisA/HisF family.

The protein localises to the cytoplasm. It carries out the reaction 1-(5-phospho-beta-D-ribosyl)-5-[(5-phospho-beta-D-ribosylamino)methylideneamino]imidazole-4-carboxamide = 5-[(5-phospho-1-deoxy-D-ribulos-1-ylimino)methylamino]-1-(5-phospho-beta-D-ribosyl)imidazole-4-carboxamide. Its pathway is amino-acid biosynthesis; L-histidine biosynthesis; L-histidine from 5-phospho-alpha-D-ribose 1-diphosphate: step 4/9. This Synechococcus sp. (strain WH7803) protein is 1-(5-phosphoribosyl)-5-[(5-phosphoribosylamino)methylideneamino] imidazole-4-carboxamide isomerase.